Reading from the N-terminus, the 144-residue chain is Large ribosomal subunit protein uL16 (144 aa).

Belongs to the universal ribosomal protein uL16 family. As to quaternary structure, part of the 50S ribosomal subunit.

In terms of biological role, binds 23S rRNA and is also seen to make contacts with the A and possibly P site tRNAs. This Acidobacterium capsulatum (strain ATCC 51196 / DSM 11244 / BCRC 80197 / JCM 7670 / NBRC 15755 / NCIMB 13165 / 161) protein is Large ribosomal subunit protein uL16.